The following is a 259-amino-acid chain: Phosphatidylglycerol--prolipoprotein diacylglyceryl transferase (259 aa).

A run of 4 helical transmembrane segments spans residues 9 to 29, 55 to 75, 92 to 112, and 117 to 137; these read IIFS…VVGI, FITY…VLLY, EGGM…YLFC, and INFL…LFLG. Position 138 (Arg-138) interacts with a 1,2-diacyl-sn-glycero-3-phospho-(1'-sn-glycerol). 3 consecutive transmembrane segments (helical) span residues 172-192, 201-221, and 228-248; these read QLYE…YATF, GLNS…IEIF, and IGFI…MLLL.

Belongs to the Lgt family.

It is found in the cell inner membrane. The catalysed reaction is L-cysteinyl-[prolipoprotein] + a 1,2-diacyl-sn-glycero-3-phospho-(1'-sn-glycerol) = an S-1,2-diacyl-sn-glyceryl-L-cysteinyl-[prolipoprotein] + sn-glycerol 1-phosphate + H(+). Its pathway is protein modification; lipoprotein biosynthesis (diacylglyceryl transfer). Functionally, catalyzes the transfer of the diacylglyceryl group from phosphatidylglycerol to the sulfhydryl group of the N-terminal cysteine of a prolipoprotein, the first step in the formation of mature lipoproteins. The sequence is that of Phosphatidylglycerol--prolipoprotein diacylglyceryl transferase from Rickettsia felis (strain ATCC VR-1525 / URRWXCal2) (Rickettsia azadi).